Consider the following 427-residue polypeptide: 3-phosphoshikimate 1-carboxyvinyltransferase (427 aa).

The 3-phosphoshikimate site is built by lysine 22, serine 23, and arginine 27. A phosphoenolpyruvate-binding site is contributed by lysine 22. Residues glycine 94 and arginine 122 each contribute to the phosphoenolpyruvate site. 3-phosphoshikimate-binding residues include serine 165, glutamine 167, aspartate 313, and lysine 340. Glutamine 167 contacts phosphoenolpyruvate. Catalysis depends on aspartate 313, which acts as the Proton acceptor. 2 residues coordinate phosphoenolpyruvate: arginine 344 and arginine 386.

Belongs to the EPSP synthase family. Monomer.

The protein localises to the cytoplasm. It catalyses the reaction 3-phosphoshikimate + phosphoenolpyruvate = 5-O-(1-carboxyvinyl)-3-phosphoshikimate + phosphate. It participates in metabolic intermediate biosynthesis; chorismate biosynthesis; chorismate from D-erythrose 4-phosphate and phosphoenolpyruvate: step 6/7. Catalyzes the transfer of the enolpyruvyl moiety of phosphoenolpyruvate (PEP) to the 5-hydroxyl of shikimate-3-phosphate (S3P) to produce enolpyruvyl shikimate-3-phosphate and inorganic phosphate. This Koribacter versatilis (strain Ellin345) protein is 3-phosphoshikimate 1-carboxyvinyltransferase.